Reading from the N-terminus, the 85-residue chain is MEAREVEEMRRSRLLTLGGIGYTAVIALAALVLVMGALGLVLKVAAAAGALPSEVAKVANALPGLKASVDANPAAGSLSSVSVST.

The signal sequence occupies residues 1–18 (MEAREVEEMRRSRLLTLG). The chain crosses the membrane as a helical span at residues 22 to 42 (YTAVIALAALVLVMGALGLVL).

As to quaternary structure, forms extremely stable complexes with apparent masses of 150, 50, 45 and 38 kDa. Found in a ring-shaped complex of 7 nm diameter with a 2 nm channel through the middle. Complete denaturation requires temperatures over 110 degrees Celsius.

The protein localises to the cell outer membrane. The most abundant protein of the outer membrane, it forms a pore through it. The polypeptide is Major outer membrane protein 1 (ihomp1) (Ignicoccus hospitalis (strain KIN4/I / DSM 18386 / JCM 14125)).